Reading from the N-terminus, the 2310-residue chain is Retinal-specific phospholipid-transporting ATPase ABCA4 (2310 aa).

The Cytoplasmic segment spans residues Met1 to Gln21. Residues Lys22–Leu42 form a helical membrane-spanning segment. Over Arg43–Ser646 the chain is Extracellular. 2 disulfide bridges follow: Cys54/Cys81 and Cys75/Cys324. N-linked (GlcNAc...) asparagine glycosylation is present at Asn98. The Mg(2+) site is built by Ser336 and Asn338. Cys370 and Cys519 are joined by a disulfide. Residues Asn415 and Asn504 are each glycosylated (N-linked (GlcNAc...) asparagine). An N-all-trans-retinylidenephosphatidylethanolamine is bound by residues Arg587 and Arg653. Intrachain disulfides connect Cys641–Cys1489, Cys1443–Cys1454, and Cys1487–Cys1501. Residues Phe647 to Val667 traverse the membrane as a helical segment. Over Ser668–Thr699 the chain is Cytoplasmic. Residues Trp700 to Met720 traverse the membrane as a helical segment. Residues His721–Pro730 are Extracellular-facing. A helical transmembrane segment spans residues Phe731–Leu751. Over Ser752–Ser759 the chain is Cytoplasmic. A helical transmembrane segment spans residues Leu760–Phe780. Residues Ala781 to Ser835 lie on the Extracellular side of the membrane. Residues Phe836–Tyr856 traverse the membrane as a helical segment. Topologically, residues Leu857–Gln1375 are cytoplasmic. Residues Glu891 to Pro910 form a disordered region. A Phosphothreonine modification is found at Thr901. Positions Val929–Val1160 constitute an ABC transporter 1 domain. Residues Phe938, Gly966, and Lys969 each contribute to the ATP site. A Mg(2+)-binding site is contributed by Thr970. The ATP site is built by Thr971, Gln1010, Lys1054, Gly1064, Gly1065, and His1118. The residue at position 1185 (Ser1185) is a Phosphoserine. The disordered stretch occupies residues Arg1311–Asn1344. Residues Ile1376 to Phe1396 form a helical membrane-spanning segment. Topologically, residues Gly1397–Asn1726 are extracellular. An N-linked (GlcNAc...) asparagine glycan is attached at Asn1468. Residues Asn1528, Asn1587, and Asn1661 are each glycosylated (N-linked (GlcNAc...) asparagine). A helical membrane pass occupies residues Phe1727–Gly1747. Residues Phe1748 to Asn1758 are Cytoplasmic-facing. The chain crosses the membrane as a helical span at residues Leu1759–Pro1779. Topologically, residues Ala1780 to Tyr1791 are extracellular. The helical transmembrane segment at Val1792–Leu1812 threads the bilayer. The Cytoplasmic portion of the chain corresponds to Glu1813–Lys1830. The helical transmembrane segment at Leu1831–Gln1851 threads the bilayer. Residues Ala1852–Asp1872 are Extracellular-facing. The helical transmembrane segment at Leu1873–Leu1893 threads the bilayer. Residues Leu1894–Gln2310 are Cytoplasmic-facing. In terms of domain architecture, ABC transporter 2 spans Leu1937 to Lys2169. The ATP site is built by Asn1973, Gly1974, Lys1977, Thr1978, Thr1979, and Gly2072. A Mg(2+)-binding site is contributed by Thr1978. Positions Val2243 to Ala2248 are essential for ATP binding and ATPase activity. A disordered region spans residues Ala2266–Gln2310. Residues Ala2301–Gln2310 are compositionally biased toward basic and acidic residues.

Belongs to the ABC transporter superfamily. ABCA family. Post-translationally, N-glycosylated. In terms of processing, proteolytic cleavage by trypsin leads to a 120-kDa N-terminal fragment and a 115-kDa C-terminal fragment that are linked through disulfide bonds. Phosphorylation is independent of light exposure and modulates ATPase activity. As to expression, retinal-specific. Seems to be exclusively found in the rims of rod photoreceptor cells.

It is found in the membrane. It localises to the endoplasmic reticulum. Its subcellular location is the cell projection. The protein resides in the cilium. The protein localises to the photoreceptor outer segment. It catalyses the reaction an N-all-trans-retinylidenephosphatidylethanolamine(out) + ATP + H2O = an N-all-trans-retinylidenephosphatidylethanolamine(in) + ADP + phosphate + H(+). The enzyme catalyses ATP + H2O + phospholipidSide 1 = ADP + phosphate + phospholipidSide 2.. It carries out the reaction a 1,2-diacyl-sn-glycero-3-phosphoethanolamine(out) + ATP + H2O = a 1,2-diacyl-sn-glycero-3-phosphoethanolamine(in) + ADP + phosphate + H(+). The catalysed reaction is N-11-cis-retinylidenephosphatidylethanolamine(out) + ATP + H2O = N-11-cis-retinylidenephosphatidylethanolamine(in) + ADP + phosphate + H(+). It catalyses the reaction ATP + H2O = ADP + phosphate + H(+). ATPase activity is decreased by cholesterol and ceramide. Phospholipids translocase activity is highly reduced by berylium fluoride and aluminum floride. N-ethylmaleimide inhibits phospholipid translocase activity. Flippase that catalyzes in an ATP-dependent manner the transport of retinal-phosphatidylethanolamine conjugates like the 11-cis and all-trans isomers of N-retinylidene-phosphatidylethanolamine from the lumen to the cytoplasmic leaflet of photoreceptor outer segment disk membranes, where N-cis-retinylidene-phosphatidylethanolamine (N-cis-R-PE) is then isomerized to its all-trans isomer (N-trans-R-PE) and reduced by RDH8 to produce all-trans-retinol (all-trans-rol) and therefore prevents the accumulation of excess of 11-cis-retinal and its schiff-base conjugate and the formation of toxic bisretinoid. Displays ATPase activity in vitro in absence of retinal substrate. May display GTPase activity that is strongly influenced by the lipid environment and the presence of retinoid compounds. Binds the unprotonated form of N-retinylidene-phosphatidylethanolamine with high affinity in the absence of ATP and ATP binding and hydrolysis induce a protein conformational change that causes the dissociation of N-retinylidene-phosphatidylethanolamine. The chain is Retinal-specific phospholipid-transporting ATPase ABCA4 from Mus musculus (Mouse).